Consider the following 56-residue polypeptide: Alpha-conotoxin Pn1.2 (56 aa).

The signal sequence occupies residues 1-16; that stretch reads MFTVFLLVVLATTVVS. The propeptide occupies 17–39; that stretch reads FTSDRASDGGNAAMSDLIALTIK. Intrachain disulfides connect cysteine 41/cysteine 47 and cysteine 42/cysteine 55. The ser-Xaa-Pro motif, crucial for potent interaction with nAChR stretch occupies residues 43-45; sequence SHP. Cysteine 55 bears the Cysteine amide mark.

This sequence belongs to the conotoxin A superfamily. Post-translationally, non-native isomers 'ribbon' (with disulfide connectivity C1-C4; C2-C3) and 'beads' (with disulfide connectivity C1-C2; C3-C4) also inhibit high voltage-activated (HVA) calcium channel currents in rat DRG neurons (20-30% inhibition at 1 uM toxin). In terms of tissue distribution, expressed by the venom duct.

The protein localises to the secreted. Functionally, alpha-conotoxins act on postsynaptic membranes, they bind to the nicotinic acetylcholine receptors (nAChR) and thus inhibit them. This toxin inhibits human alpha-7/CHRNA7 and alpha-9-alpha-10/CHRNA9/CHRNA10 AChR (complete inhibition at 3 uM of toxin). In addition, this toxin inhibits high voltage-activated (HVA) calcium channel currents in rat DRG neurons (22% inhibition at 1 uM toxin) probably by activating GABA(B) receptors (GABBR1 and/or GABBR2). The polypeptide is Alpha-conotoxin Pn1.2 (Conus pennaceus (Feathered cone)).